The chain runs to 266 residues: Undecaprenyl-diphosphatase (266 aa).

Transmembrane regions (helical) follow at residues 1–21, 39–59, 87–107, 113–133, 143–163, 187–207, 218–238, and 244–264; these read MTLF…FLPI, QGLA…MIYF, WYVI…KGWI, TALV…YADA, GLTL…LIPG, FSFL…TLDL, ALLY…YLFL, and IGML…LWFV.

It belongs to the UppP family.

It localises to the cell inner membrane. The enzyme catalyses di-trans,octa-cis-undecaprenyl diphosphate + H2O = di-trans,octa-cis-undecaprenyl phosphate + phosphate + H(+). Functionally, catalyzes the dephosphorylation of undecaprenyl diphosphate (UPP). Confers resistance to bacitracin. This is Undecaprenyl-diphosphatase from Alteromonas mediterranea (strain DSM 17117 / CIP 110805 / LMG 28347 / Deep ecotype).